The sequence spans 775 residues: Transcription activator of gluconeogenesis HCBG_00867 (775 aa).

The interval Met-1–Arg-70 is disordered. 2 stretches are compositionally biased toward polar residues: residues Asn-21–Ala-41 and Thr-48–Ala-60. Residues Cys-77–Cys-105 constitute a DNA-binding region (zn(2)-C6 fungal-type). Disordered regions lie at residues Thr-179–Ala-248, Gly-286–Asn-351, Asn-556–Gly-592, and Gln-649–Gln-725. Residues Met-195 to Asp-217 show a composition bias toward polar residues. The segment covering Leu-218–Ser-229 has biased composition (low complexity). Composition is skewed to polar residues over residues Ala-230–Asp-244, Pro-292–Pro-323, Trp-334–Asn-351, and Leu-557–Asn-576. The segment covering Gly-657–Asp-668 has biased composition (gly residues). Positions Val-669–Ala-713 are enriched in low complexity.

Belongs to the ERT1/acuK family.

It is found in the nucleus. In terms of biological role, transcription factor which regulates nonfermentable carbon utilization. Activator of gluconeogenetic genes. In Ajellomyces capsulatus (strain G186AR / H82 / ATCC MYA-2454 / RMSCC 2432) (Darling's disease fungus), this protein is Transcription activator of gluconeogenesis HCBG_00867.